The chain runs to 66 residues: Potassium channel toxin alpha-KTx 27.3 (66 aa).

The first 17 residues, 1–17 (MKLMWLLFLCVLAFSIA), serve as a signal peptide directing secretion.

It belongs to the short scorpion toxin superfamily. Potassium channel inhibitor family. Alpha-KTx 27 subfamily. In terms of processing, contains 4 disulfide bonds. Expressed by the venom gland.

It localises to the secreted. This chain is Potassium channel toxin alpha-KTx 27.3, found in Lychas mucronatus (Chinese swimming scorpion).